The sequence spans 312 residues: Glyoxylate/hydroxypyruvate reductase A (312 aa).

Residue R227 is part of the active site. H275 (proton donor) is an active-site residue.

The protein belongs to the D-isomer specific 2-hydroxyacid dehydrogenase family. GhrA subfamily.

Its subcellular location is the cytoplasm. It catalyses the reaction glycolate + NADP(+) = glyoxylate + NADPH + H(+). The enzyme catalyses (R)-glycerate + NAD(+) = 3-hydroxypyruvate + NADH + H(+). The catalysed reaction is (R)-glycerate + NADP(+) = 3-hydroxypyruvate + NADPH + H(+). In terms of biological role, catalyzes the NADPH-dependent reduction of glyoxylate and hydroxypyruvate into glycolate and glycerate, respectively. The sequence is that of Glyoxylate/hydroxypyruvate reductase A from Salmonella agona (strain SL483).